The sequence spans 225 residues: UPF0173 metal-dependent hydrolase Pcal_1074 (225 aa).

Belongs to the UPF0173 family.

The protein is UPF0173 metal-dependent hydrolase Pcal_1074 of Pyrobaculum calidifontis (strain DSM 21063 / JCM 11548 / VA1).